Reading from the N-terminus, the 32-residue chain is Photosystem II reaction center protein T (32 aa).

Residues 3 to 23 (AFAYVLILTLAVVTLFFAVAF) form a helical membrane-spanning segment.

This sequence belongs to the PsbT family. In terms of assembly, PSII is composed of 1 copy each of membrane proteins PsbA, PsbB, PsbC, PsbD, PsbE, PsbF, PsbH, PsbI, PsbJ, PsbK, PsbL, PsbM, PsbT, PsbX, PsbY, Psb30/Ycf12, peripheral proteins PsbO, CyanoQ (PsbQ), PsbU, PsbV and a large number of cofactors. It forms dimeric complexes.

The protein localises to the cellular thylakoid membrane. Functionally, found at the monomer-monomer interface of the photosystem II (PS II) dimer, plays a role in assembly and dimerization of PSII. PSII is a light-driven water plastoquinone oxidoreductase, using light energy to abstract electrons from H(2)O, generating a proton gradient subsequently used for ATP formation. The sequence is that of Photosystem II reaction center protein T from Prochlorococcus marinus (strain MIT 9301).